Reading from the N-terminus, the 418-residue chain is Neurotensin receptor type 1 (418 aa).

At 1 to 67 (MRLNSSAPGT…TDIYSKVLVT (67 aa)) the chain is on the extracellular side. Residues Asn-4, Asn-37, and Asn-41 are each glycosylated (N-linked (GlcNAc...) asparagine). A helical membrane pass occupies residues 68–88 (AVYLALFVVGTVGNTVTAFTL). The Cytoplasmic segment spans residues 89-102 (ARKKSLQSLQSTVH). The chain crosses the membrane as a helical span at residues 103–122 (YHLGSLALSDLLTLLLAMPV). At 123–142 (ELYNFIWVHHPWAFGDAGCR) the chain is on the extracellular side. A disulfide bridge links Cys-141 with Cys-224. Residues 143 to 164 (GYYFLRDACTYATALNVASLSV) form a helical membrane-spanning segment. The Cytoplasmic segment spans residues 165-184 (ERYLAICHPFKAKTLMSRSR). The chain crosses the membrane as a helical span at residues 185–205 (TKKFISAIWLASALLAVPMLF). The Extracellular portion of the chain corresponds to 206 to 234 (TMGEQNRSADGQHAGGLVCTPTIHTATVK). Residues 235 to 259 (VVIQVNTFMSFIFPMVVISVLNTII) form a helical membrane-spanning segment. Residues 260–303 (ANKLTVMVRQAAEQGQVCTVGGEHSTFSMAIEPGRVQALRHGVR) lie on the Cytoplasmic side of the membrane. The helical transmembrane segment at 304-325 (VLRAVVIAFVVCWLPYHVRRLM) threads the bilayer. The segment at 321-344 (VRRLMFCYISDEQWTPFLYDFYHY) is neurotensin binding. The Extracellular segment spans residues 326 to 343 (FCYISDEQWTPFLYDFYH). Residues 344–364 (YFYMVTNALFYVSSTINPILY) form a helical membrane-spanning segment. Over 365 to 418 (NLVSANFRHIFLATLACLCPVWRRRRKRPAFSRKADSVSSNHTLSSNATRETLY) the chain is Cytoplasmic. 2 S-palmitoyl cysteine lipidation sites follow: Cys-381 and Cys-383.

This sequence belongs to the G-protein coupled receptor 1 family. Neurotensin receptor subfamily. NTSR1 sub-subfamily. As to quaternary structure, interacts (palmitoylated form) with GNA11. N-glycosylated. In terms of processing, palmitoylated; this is required for normal localization at membrane rafts and normal GNA11-mediated activation of down-stream signaling cascades. The palmitoylation level increases in response to neurotensin treatment. Expressed in prostate (at protein level). Detected in colon and peripheral blood mononuclear cells. Detected at very low levels in brain.

The protein resides in the cell membrane. The protein localises to the membrane raft. Functionally, G-protein coupled receptor for the tridecapeptide neurotensin (NTS). Signaling is effected via G proteins that activate a phosphatidylinositol-calcium second messenger system. Signaling leads to the activation of downstream MAP kinases and protects cells against apoptosis. This Homo sapiens (Human) protein is Neurotensin receptor type 1 (NTSR1).